The sequence spans 274 residues: Large ribosomal subunit protein uL2 (274 aa).

Disordered stretches follow at residues 28-55 (APHA…RHVG) and 224-274 (VAMN…RRRK).

It belongs to the universal ribosomal protein uL2 family. Part of the 50S ribosomal subunit. Forms a bridge to the 30S subunit in the 70S ribosome.

Its function is as follows. One of the primary rRNA binding proteins. Required for association of the 30S and 50S subunits to form the 70S ribosome, for tRNA binding and peptide bond formation. It has been suggested to have peptidyltransferase activity; this is somewhat controversial. Makes several contacts with the 16S rRNA in the 70S ribosome. In Pseudomonas putida (strain GB-1), this protein is Large ribosomal subunit protein uL2.